The chain runs to 393 residues: N-acyl-phosphatidylethanolamine-hydrolyzing phospholipase D (393 aa).

N-acetylmethionine is present on methionine 1. Residues 1–16 are compositionally biased toward polar residues; sequence MDENESNQSLMTSSQY. The tract at residues 1–40 is disordered; the sequence is MDENESNQSLMTSSQYPKEAVRKRQNSARNSGASDSSRFS. Zn(2+) contacts are provided by histidine 185 and histidine 187. An an N-acyl-1,2-diacyl-sn-glycero-3-phosphoethanolamine-binding site is contributed by tyrosine 188. 3 residues coordinate Zn(2+): aspartate 189, histidine 190, and histidine 253. Residues lysine 256 and methionine 260 each coordinate deoxycholate. Zn(2+) is bound at residue aspartate 284. Histidine 321 provides a ligand contact to an N-acyl-1,2-diacyl-sn-glycero-3-phosphoethanolamine. Histidine 343 provides a ligand contact to Zn(2+). Alanine 348 is a binding site for deoxycholate.

This sequence belongs to the NAPE-PLD family. As to quaternary structure, homodimer. Bile acids promote the assembly of inactive monomers into an active dimer and enable catalysis. The cofactor is Zn(2+). In terms of tissue distribution, widely expressed. Highest expression in brain, kidney and testis (at protein level). Expressed in adipose tissue (at protein level).

Its subcellular location is the golgi apparatus membrane. It localises to the early endosome membrane. It is found in the nucleus envelope. The protein resides in the nucleus. The protein localises to the nucleoplasm. The enzyme catalyses an N-acyl-1,2-diacyl-sn-glycero-3-phosphoethanolamine + H2O = an N-acylethanolamine + a 1,2-diacyl-sn-glycero-3-phosphate + H(+). It catalyses the reaction N-butanoyl-1-hexadecanoyl-2-(9Z,12Z-octadecadienoyl)-sn-glycero-3-phosphoethanolamine + H2O = N-butanoyl ethanolamine + 1-hexadecanoyl-2-(9Z,12Z-octadecadienoyl)-sn-glycero-3-phosphate + H(+). It carries out the reaction N-hexanoyl-1-hexadecanoyl-2-(9Z,12Z-octadecadienoyl)-sn-glycero-3-phosphoethanolamine + H2O = N-hexanoyl ethanolamine + 1-hexadecanoyl-2-(9Z,12Z-octadecadienoyl)-sn-glycero-3-phosphate + H(+). The catalysed reaction is N-octanoyl-1-hexadecanoyl-2-(9Z,12Z-octadecadienoyl)-sn-glycero-3-phosphoethanolamine + H2O = N-octanoyl ethanolamine + 1-hexadecanoyl-2-(9Z,12Z-octadecadienoyl)-sn-glycero-3-phosphate + H(+). The enzyme catalyses N-decanoyl-1-hexadecanoyl-2-(9Z,12Z-octadecadienoyl)-sn-glycero-3-phosphoethanolamine + H2O = N-decanoyl ethanolamine + 1-hexadecanoyl-2-(9Z,12Z-octadecadienoyl)-sn-glycero-3-phosphate + H(+). It catalyses the reaction N-dodecanoyl-1,2-di-(9Z-octadecenoyl)-sn-glycero-3-phosphoethanolamine + H2O = N-dodecanoylethanolamine + 1,2-di-(9Z-octadecenoyl)-sn-glycero-3-phosphate + H(+). It carries out the reaction N-tetradecanoyl-1,2-di-(9Z-octadecenoyl)-sn-glycero-3-phosphoethanolamine + H2O = N-tetradecanoylethanolamine + 1,2-di-(9Z-octadecenoyl)-sn-glycero-3-phosphate + H(+). The catalysed reaction is N-hexadecanoyl-1,2-di-(9Z-octadecenoyl)-sn-glycero-3-phosphoethanolamine + H2O = N-hexadecanoylethanolamine + 1,2-di-(9Z-octadecenoyl)-sn-glycero-3-phosphate + H(+). The enzyme catalyses N,1-dihexadecanoyl-2-(9Z,12Z-octadecadienoyl)-sn-glycero-3-phosphoethanolamine + H2O = 1-hexadecanoyl-2-(9Z,12Z-octadecadienoyl)-sn-glycero-3-phosphate + N-hexadecanoylethanolamine + H(+). It catalyses the reaction N-octadecanoyl-1,2-di-(9Z-octadecenoyl)-sn-glycero-3-phosphoethanolamine + H2O = N-octadecanoyl ethanolamine + 1,2-di-(9Z-octadecenoyl)-sn-glycero-3-phosphate + H(+). It carries out the reaction N,1,2-tri-(9Z-octadecenoyl)-sn-glycero-3-phosphoethanolamine + H2O = N-(9Z-octadecenoyl) ethanolamine + 1,2-di-(9Z-octadecenoyl)-sn-glycero-3-phosphate + H(+). The catalysed reaction is N-(5Z,8Z,11Z,14Z-eicosatetraenoyl)-1,2-diacyl-sn-glycero-3-phosphoethanolamine + H2O = N-(5Z,8Z,11Z,14Z-eicosatetraenoyl)-ethanolamine + a 1,2-diacyl-sn-glycero-3-phosphate + H(+). The enzyme catalyses N-(5Z,8Z,11Z,14Z-eicosatetraenoyl)-1,2-di-(9Z-octadecenoyl)-sn-glycero-3-phosphoethanolamine + H2O = N-(5Z,8Z,11Z,14Z-eicosatetraenoyl)-ethanolamine + 1,2-di-(9Z-octadecenoyl)-sn-glycero-3-phosphate + H(+). It catalyses the reaction 1-O-(1Z-octadecenoyl)-2-(9Z-octadecenoyl)-sn-glycero-3-phospho-N-hexadecanoyl-ethanolamine + H2O = 1-O-(1Z-octadecenoyl)-2-(9Z-octadecenoyl)-sn-glycero-3-phosphate + N-hexadecanoylethanolamine + H(+). It carries out the reaction N,1-diacyl-sn-glycero-3-phosphoethanolamine + H2O = an N-acylethanolamine + a 1-acyl-sn-glycero-3-phosphate + H(+). The catalysed reaction is N,1-dihexadecanoyl-sn-glycero-3-phosphoethanolamine + H2O = N-hexadecanoylethanolamine + 1-hexadecanoyl-sn-glycero-3-phosphate + H(+). The enzyme catalyses N-(5Z,8Z,11Z,14Z-eicosatetraenoyl)-1-(9Z-octadecenoyl)-sn-glycero-3-phosphoethanolamine + H2O = N-(5Z,8Z,11Z,14Z-eicosatetraenoyl)-ethanolamine + 1-(9Z-octadecenoyl)-sn-glycero-3-phosphate + H(+). With respect to regulation, activated by divalent cations. Activated by bile acids and their conjugates, except for lithocholic acid which is rather inhibitory. Binding of deoxycholic acid favors the selective release of anandamide and likely other unsatured long FAEs. Inhibited by phosphatidylethanolamines. Its function is as follows. D-type phospholipase that hydrolyzes N-acyl-phosphatidylethanolamines (NAPEs) to produce bioactive N-acylethanolamines/fatty acid ethanolamides (NAEs/FAEs) and phosphatidic acid. Cleaves the terminal phosphodiester bond of diacyl- and alkenylacyl-NAPEs, primarily playing a role in the generation of long-chain saturated and monounsaturated NAEs in the brain. May control NAPE homeostasis in dopaminergic neuron membranes and regulate neuron survival, partly through RAC1 activation. As a regulator of lipid metabolism in the adipose tissue, mediates the crosstalk between adipocytes, gut microbiota and immune cells to control body temperature and weight. In particular, regulates energy homeostasis by promoting cold-induced brown or beige adipocyte differentiation program to generate heat from fatty acids and glucose. Has limited D-type phospholipase activity toward N-acyl lyso-NAPEs. In Homo sapiens (Human), this protein is N-acyl-phosphatidylethanolamine-hydrolyzing phospholipase D (NAPEPLD).